The chain runs to 155 residues: uncharacterized protein (155 aa).

Helical transmembrane passes span 2–24 (TFLF…PPIF), 62–84 (AVVN…YLVL), 97–116 (VFLI…FLVV), and 131–148 (VVLL…KVFN).

The protein localises to the cell membrane. This is an uncharacterized protein from Aquifex aeolicus (strain VF5).